We begin with the raw amino-acid sequence, 452 residues long: Cell division protein FtsZ (452 aa).

GTP is bound by residues 24-28 (GAGSN), 111-113 (GTG), glutamate 142, arginine 146, and aspartate 190.

It belongs to the FtsZ family. Homodimer. Polymerizes to form a dynamic ring structure in a strictly GTP-dependent manner. Interacts directly with several other division proteins.

Its subcellular location is the cytoplasm. Essential cell division protein that forms a contractile ring structure (Z ring) at the future cell division site. The regulation of the ring assembly controls the timing and the location of cell division. One of the functions of the FtsZ ring is to recruit other cell division proteins to the septum to produce a new cell wall between the dividing cells. Binds GTP and shows GTPase activity. This is Cell division protein FtsZ from Rickettsia prowazekii (strain Madrid E).